The primary structure comprises 239 residues: MTAVVNIAAYKFVSIANPADLREPMLEQAGQRQLKGTVLLAPEGINLFLAGAADAIEGFLRWLRADARFADLQAKYSESARMPFRKLLVKVKREIIRMDHPAIRPEAGRAPAVDAATLRRWLAQGRELVMLDTRNAFEVEVGTFRGALDWRIERFTQFPQAVRDNQAALAGKTVVSFCMGGIRCEKAAIYMAEAGIEHVYQLEGGILKYFEETDGAGFDGACFVFDERVALDAALAPQA.

The Rhodanese domain occupies 124–214 (QGRELVMLDT…GILKYFEETD (91 aa)). Cysteine 178 functions as the Cysteine persulfide intermediate in the catalytic mechanism.

Belongs to the TrhO family.

The enzyme catalyses uridine(34) in tRNA + AH2 + O2 = 5-hydroxyuridine(34) in tRNA + A + H2O. In terms of biological role, catalyzes oxygen-dependent 5-hydroxyuridine (ho5U) modification at position 34 in tRNAs. This Bordetella parapertussis (strain 12822 / ATCC BAA-587 / NCTC 13253) protein is tRNA uridine(34) hydroxylase.